The sequence spans 574 residues: Proline--tRNA ligase (574 aa).

It belongs to the class-II aminoacyl-tRNA synthetase family. ProS type 1 subfamily. As to quaternary structure, homodimer.

Its subcellular location is the cytoplasm. It carries out the reaction tRNA(Pro) + L-proline + ATP = L-prolyl-tRNA(Pro) + AMP + diphosphate. In terms of biological role, catalyzes the attachment of proline to tRNA(Pro) in a two-step reaction: proline is first activated by ATP to form Pro-AMP and then transferred to the acceptor end of tRNA(Pro). As ProRS can inadvertently accommodate and process non-cognate amino acids such as alanine and cysteine, to avoid such errors it has two additional distinct editing activities against alanine. One activity is designated as 'pretransfer' editing and involves the tRNA(Pro)-independent hydrolysis of activated Ala-AMP. The other activity is designated 'posttransfer' editing and involves deacylation of mischarged Ala-tRNA(Pro). The misacylated Cys-tRNA(Pro) is not edited by ProRS. This chain is Proline--tRNA ligase, found in Oleidesulfovibrio alaskensis (strain ATCC BAA-1058 / DSM 17464 / G20) (Desulfovibrio alaskensis).